We begin with the raw amino-acid sequence, 296 residues long: Transcription factor bHLH99 (296 aa).

In terms of domain architecture, bHLH spans 99 to 150; the sequence is NQRMNHIAVERNRRKQMNHFLSILKSMMPLSYSQPNDQASIIEGTISYLKKL.

Homodimer. Expressed constitutively in roots, stems, and flowers.

Its subcellular location is the nucleus. The polypeptide is Transcription factor bHLH99 (BHLH99) (Arabidopsis thaliana (Mouse-ear cress)).